The sequence spans 215 residues: Cytochrome b6 (215 aa).

Residues I32–F52 form a helical membrane-spanning segment. C35 is a binding site for heme c. Positions 86 and 100 each coordinate heme b. 3 helical membrane-spanning segments follow: residues V90–F110, L116–Y136, and L186–I206. Residues H187 and H202 each coordinate heme b.

The protein belongs to the cytochrome b family. PetB subfamily. The 4 large subunits of the cytochrome b6-f complex are cytochrome b6, subunit IV (17 kDa polypeptide, PetD), cytochrome f and the Rieske protein, while the 4 small subunits are PetG, PetL, PetM and PetN. The complex functions as a dimer. Heme b serves as cofactor. It depends on heme c as a cofactor.

It is found in the plastid. It localises to the chloroplast thylakoid membrane. Functionally, component of the cytochrome b6-f complex, which mediates electron transfer between photosystem II (PSII) and photosystem I (PSI), cyclic electron flow around PSI, and state transitions. The chain is Cytochrome b6 from Pyropia yezoensis (Susabi-nori).